The primary structure comprises 162 residues: Probable chemoreceptor glutamine deamidase CheD 2 (162 aa).

The protein belongs to the CheD family.

It carries out the reaction L-glutaminyl-[protein] + H2O = L-glutamyl-[protein] + NH4(+). In terms of biological role, probably deamidates glutamine residues to glutamate on methyl-accepting chemotaxis receptors (MCPs), playing an important role in chemotaxis. The protein is Probable chemoreceptor glutamine deamidase CheD 2 of Geobacter metallireducens (strain ATCC 53774 / DSM 7210 / GS-15).